A 241-amino-acid polypeptide reads, in one-letter code: DNA repair protein RecO (241 aa).

Belongs to the RecO family.

Its function is as follows. Involved in DNA repair and RecF pathway recombination. The sequence is that of DNA repair protein RecO from Yersinia enterocolitica serotype O:8 / biotype 1B (strain NCTC 13174 / 8081).